The sequence spans 319 residues: Ribose-phosphate pyrophosphokinase (319 aa).

ATP is bound by residues 41-43 (NGE) and 100-101 (RQ). Mg(2+) contacts are provided by H134 and D175. Residue K198 is part of the active site. D-ribose 5-phosphate-binding positions include R200, D224, and 228-232 (DTAGS).

This sequence belongs to the ribose-phosphate pyrophosphokinase family. Class I subfamily. Homohexamer. The cofactor is Mg(2+).

The protein localises to the cytoplasm. The catalysed reaction is D-ribose 5-phosphate + ATP = 5-phospho-alpha-D-ribose 1-diphosphate + AMP + H(+). The protein operates within metabolic intermediate biosynthesis; 5-phospho-alpha-D-ribose 1-diphosphate biosynthesis; 5-phospho-alpha-D-ribose 1-diphosphate from D-ribose 5-phosphate (route I): step 1/1. Functionally, involved in the biosynthesis of the central metabolite phospho-alpha-D-ribosyl-1-pyrophosphate (PRPP) via the transfer of pyrophosphoryl group from ATP to 1-hydroxyl of ribose-5-phosphate (Rib-5-P). The protein is Ribose-phosphate pyrophosphokinase of Clostridium acetobutylicum (strain ATCC 824 / DSM 792 / JCM 1419 / IAM 19013 / LMG 5710 / NBRC 13948 / NRRL B-527 / VKM B-1787 / 2291 / W).